A 591-amino-acid polypeptide reads, in one-letter code: CTP synthase 1 (591 aa).

One can recognise a Glutamine amidotransferase type-1 domain in the interval serine 300–tyrosine 554. Active-site for GATase activity residues include cysteine 399, histidine 526, and glutamate 528. 2 positions are modified to phosphoserine: serine 571 and serine 575.

The protein belongs to the CTP synthase family.

The enzyme catalyses UTP + L-glutamine + ATP + H2O = CTP + L-glutamate + ADP + phosphate + 2 H(+). The protein operates within pyrimidine metabolism; CTP biosynthesis via de novo pathway; CTP from UDP: step 2/2. This enzyme is involved in the de novo synthesis of CTP, a precursor of DNA, RNA and phospholipids. Catalyzes the ATP-dependent amination of UTP to CTP with either L-glutamine or ammonia as a source of nitrogen. The sequence is that of CTP synthase 1 (ctps1) from Danio rerio (Zebrafish).